A 120-amino-acid chain; its full sequence is NAD(P)H-quinone oxidoreductase subunit 3 (120 aa).

Transmembrane regions (helical) follow at residues 11–31, 64–84, and 89–109; these read LIFLLLSALVPVLALTISYLI, MFALVFVVFDVETVFLYPWAV, and LGLLAFIEALIFIAILVVALV.

Belongs to the complex I subunit 3 family. NDH-1 can be composed of about 15 different subunits; different subcomplexes with different compositions have been identified which probably have different functions.

The protein localises to the cell inner membrane. It catalyses the reaction a plastoquinone + NADH + (n+1) H(+)(in) = a plastoquinol + NAD(+) + n H(+)(out). The catalysed reaction is a plastoquinone + NADPH + (n+1) H(+)(in) = a plastoquinol + NADP(+) + n H(+)(out). Its function is as follows. NDH-1 shuttles electrons from an unknown electron donor, via FMN and iron-sulfur (Fe-S) centers, to quinones in the respiratory and/or the photosynthetic chain. The immediate electron acceptor for the enzyme in this species is believed to be plastoquinone. Couples the redox reaction to proton translocation, and thus conserves the redox energy in a proton gradient. Cyanobacterial NDH-1 also plays a role in inorganic carbon-concentration. The polypeptide is NAD(P)H-quinone oxidoreductase subunit 3 (Gloeobacter violaceus (strain ATCC 29082 / PCC 7421)).